Consider the following 339-residue polypeptide: Probable G-protein coupled receptor 33 (339 aa).

Topologically, residues 1 to 30 (MDLINSSTHVINVSTSLTNSTGVPTPAPKT) are extracellular. N-linked (GlcNAc...) asparagine glycans are attached at residues Asn5, Asn12, and Asn19. Residues 31–53 (IIAASLFMAFIIGVISNGLYLWM) form a helical membrane-spanning segment. Over 54–64 (LQFKMQRTVNT) the chain is Cytoplasmic. The helical transmembrane segment at 65-86 (LLFFHLILSYFISTLILPFMAT) threads the bilayer. Residues 87 to 103 (SFLQDNHWVFGSVLCKA) are Extracellular-facing. The cysteines at positions 101 and 179 are disulfide-linked. Residues 104–124 (FNSTLSVSMFASVFFLSAISV) form a helical membrane-spanning segment. Over 125–143 (ARYYLILHPVWSQQHRTPH) the chain is Cytoplasmic. Residues 144–165 (WASRIALQIWISATILSIPYLV) form a helical membrane-spanning segment. Over 166 to 209 (FRTTHDDHKGRIKCQNNYIVSTDWESKEHQTLGQWIHAACFVGR) the chain is Extracellular. Residues 210-230 (FLLGFLLPFLVIIFCYKRVAT) traverse the membrane as a helical segment. Residues 231-246 (KMKEKGLFKSSKPFKV) are Cytoplasmic-facing. The helical transmembrane segment at 247-268 (MVTAVISFFVCWMPYHVHSGLV) threads the bilayer. At 269–283 (LTKSQPLPLHLTLGL) the chain is on the extracellular side. Residues 284–303 (AVVTISFNTVVSPVLYLFTG) traverse the membrane as a helical segment. Topologically, residues 304–339 (ENFKVFKKSILALFNSTFSDISSTERTQTLNSETEI) are cytoplasmic.

Belongs to the G-protein coupled receptor 1 family. As to expression, expressed predominantly in lung, spleen and testis.

It localises to the cell membrane. Its function is as follows. Orphan receptor; could be a chemoattractant receptor. In Mus musculus (Mouse), this protein is Probable G-protein coupled receptor 33 (Gpr33).